We begin with the raw amino-acid sequence, 170 residues long: MDFKQHIAIVPDYPKEGIVFKDITPLMNDGKAYKAATDAIVEYANKRDIDVVVGPEARGFIIGCPVSYALEVGFAPVRKLGKLPREVITVDYGKEYGTDVLTIHKDAIKPGQRVLITDDLLATGGTIEATIKLVEELGGVVAGIAFLVELTYLDGRKMLDGYDVLVLEKY.

The protein belongs to the purine/pyrimidine phosphoribosyltransferase family. As to quaternary structure, homodimer.

The protein resides in the cytoplasm. The catalysed reaction is AMP + diphosphate = 5-phospho-alpha-D-ribose 1-diphosphate + adenine. Its pathway is purine metabolism; AMP biosynthesis via salvage pathway; AMP from adenine: step 1/1. Functionally, catalyzes a salvage reaction resulting in the formation of AMP, that is energically less costly than de novo synthesis. This is Adenine phosphoribosyltransferase from Bacillus mycoides (strain KBAB4) (Bacillus weihenstephanensis).